A 443-amino-acid chain; its full sequence is Alpha-amylase (443 aa).

A signal peptide spans 1 to 24 (MHNTLFRTALLAAALGSFSHTASA). Residues His114 and Arg196 each contribute to the substrate site. Asp198 functions as the Nucleophile in the catalytic mechanism. A substrate-binding site is contributed by 201–202 (KH). Catalysis depends on Glu223, which acts as the Proton donor. Residues Gly228 and His287 each coordinate substrate.

It belongs to the glycosyl hydrolase 13 family.

Its subcellular location is the secreted. It catalyses the reaction Endohydrolysis of (1-&gt;4)-alpha-D-glucosidic linkages in polysaccharides containing three or more (1-&gt;4)-alpha-linked D-glucose units.. The polypeptide is Alpha-amylase (amyA) (Aeromonas hydrophila).